A 798-amino-acid polypeptide reads, in one-letter code: Protocadherin beta-10 (798 aa).

Positions 1-26 are cleaved as a signal peptide; sequence MAVRELCFSRQRQVLFLFLFWGVSLA. Topologically, residues 27 to 690 are extracellular; that stretch reads GSGFGRYSVT…AQADLLTVYL (664 aa). 5 Cadherin domains span residues 35-133, 138-242, 247-347, 352-451, and 456-561; these read VTEE…APVF, TVLK…APQF, YETQ…PPEL, FSNS…APAF, and YTLF…SPFV. An N-linked (GlcNAc...) asparagine glycan is attached at Asn169. Asn418 and Asn436 each carry an N-linked (GlcNAc...) asparagine glycan. An N-linked (GlcNAc...) asparagine glycan is attached at Asn567. Residues 568 to 671 form the Cadherin 6 domain; sequence GSAPCTELVP…LVDGFSQPYL (104 aa). Residues 691-711 form a helical membrane-spanning segment; that stretch reads VVALASVSSLFLFSVLLFVAV. Over 712-798 the chain is Cytoplasmic; the sequence is RLCRRSRAAS…FRNSFGFNIQ (87 aa).

It localises to the cell membrane. Potential calcium-dependent cell-adhesion protein. May be involved in the establishment and maintenance of specific neuronal connections in the brain. The protein is Protocadherin beta-10 (PCDHB10) of Pan troglodytes (Chimpanzee).